An 80-amino-acid chain; its full sequence is FXYD domain-containing ion transport regulator 7 (80 aa).

Residues 1 to 22 (MATPTQSPTNVPEETDPFFYDY) are Extracellular-facing. O-linked (GlcNAc) threonine glycans are attached at residues T3, T5, and T9. The chain crosses the membrane as a helical span at residues 23-45 (ATVQTVGMTLATIMFVLGIIIII). Residues 46-80 (SKKVKCRKADSRSESPTCKSCKSELPSSAPGGGGV) are Cytoplasmic-facing. A disordered region spans residues 56-80 (SRSESPTCKSCKSELPSSAPGGGGV). Position 73 is a phosphoserine (S73).

It belongs to the FXYD family. In terms of assembly, regulatory subunit of the sodium/potassium-transporting ATPase which is composed of a catalytic alpha subunit, a non-catalytic beta subunit and an additional regulatory subunit. The regulatory subunit, a member of the FXYD protein family, modulates the enzymatic activity in a tissue- and isoform-specific way by changing affinities of the Na+/K+-ATPase toward Na(+), K(+) or ATP. In terms of processing, O-glycosylated; required for stabilization and translocation to the plasma membrane. Expressed specifically in brain. Expressed in both neurons and glia.

Its subcellular location is the cell membrane. Associates with and regulates the activity of the sodium/potassium-transporting ATPase (NKA) which catalyzes the hydrolysis of ATP coupled with the exchange of Na(+) and K(+) ions across the plasma membrane. Reduces the apparent affinity for external K(+), an effect that depends on the presence of external Na(+) and voltage. Increases the apparent affinity for intracellular Na(+). In Rattus norvegicus (Rat), this protein is FXYD domain-containing ion transport regulator 7 (Fxyd7).